The sequence spans 117 residues: Large ribosomal subunit protein eL34 (117 aa).

Residue serine 12 is modified to Phosphoserine. Lysine 36 and lysine 43 each carry N6-acetyllysine. Lysine 108 is covalently cross-linked (Glycyl lysine isopeptide (Lys-Gly) (interchain with G-Cter in SUMO2)).

Belongs to the eukaryotic ribosomal protein eL34 family. As to quaternary structure, component of the large ribosomal subunit.

The protein localises to the cytoplasm. Its subcellular location is the cytosol. The protein resides in the endoplasmic reticulum. Its function is as follows. Component of the large ribosomal subunit. The ribosome is a large ribonucleoprotein complex responsible for the synthesis of proteins in the cell. The chain is Large ribosomal subunit protein eL34 (RPL34) from Sus scrofa (Pig).